A 202-amino-acid polypeptide reads, in one-letter code: Small ribosomal subunit protein uS4c (202 aa).

The S4 RNA-binding domain occupies 90–153 (MRLDNIIFRL…KSETIISKNI (64 aa)).

The protein belongs to the universal ribosomal protein uS4 family. In terms of assembly, part of the 30S ribosomal subunit. Contacts protein S5. The interaction surface between S4 and S5 is involved in control of translational fidelity.

It localises to the plastid. The protein localises to the chloroplast. Its function is as follows. One of the primary rRNA binding proteins, it binds directly to 16S rRNA where it nucleates assembly of the body of the 30S subunit. Functionally, with S5 and S12 plays an important role in translational accuracy. The polypeptide is Small ribosomal subunit protein uS4c (rps4) (Catharomnion ciliatum (Moss)).